The primary structure comprises 370 residues: 3-dehydroquinate synthase (370 aa).

NAD(+)-binding positions include 107–111, 131–132, Lys144, and Lys153; these read GVIGD and TS. Residues Glu186, His249, and His267 each contribute to the Zn(2+) site.

The protein belongs to the sugar phosphate cyclases superfamily. Dehydroquinate synthase family. The cofactor is Co(2+). Zn(2+) serves as cofactor. NAD(+) is required as a cofactor.

It is found in the cytoplasm. The catalysed reaction is 7-phospho-2-dehydro-3-deoxy-D-arabino-heptonate = 3-dehydroquinate + phosphate. It participates in metabolic intermediate biosynthesis; chorismate biosynthesis; chorismate from D-erythrose 4-phosphate and phosphoenolpyruvate: step 2/7. Functionally, catalyzes the conversion of 3-deoxy-D-arabino-heptulosonate 7-phosphate (DAHP) to dehydroquinate (DHQ). This Ruegeria pomeroyi (strain ATCC 700808 / DSM 15171 / DSS-3) (Silicibacter pomeroyi) protein is 3-dehydroquinate synthase.